Here is a 227-residue protein sequence, read N- to C-terminus: MLVHVPNVLTPAEIALCRARLEAGEWIDGRATAGQQAARAKHNLQIPEDSDTARELGELILRALGRSPLFNAAALPLRVLPPLFNRYDVGMSFRNHVDGAVRAIPGAGMRLRADVSTTLFLTDPDAYEGGELVIEDTFGSHAVKLPAGDMIVYPATSLHRVEPITRGSRWSAFFWSQSMVKDDGRRALLFDLDQGITGVRRKLSDDDPAAIALTSCYHNLLRRWAEM.

Residues 78–178 (RVLPPLFNRY…RWSAFFWSQS (101 aa)) form the Fe2OG dioxygenase domain. Residues His96, Asp98, and His159 each coordinate Fe cation. Arg169 is a 2-oxoglutarate binding site.

Fe(2+) serves as cofactor. It depends on L-ascorbate as a cofactor.

The polypeptide is PKHD-type hydroxylase Mnod_1077 (Methylobacterium nodulans (strain LMG 21967 / CNCM I-2342 / ORS 2060)).